A 510-amino-acid chain; its full sequence is ATP synthase subunit alpha (510 aa).

169 to 176 contributes to the ATP binding site; that stretch reads GDRQTGKT.

The protein belongs to the ATPase alpha/beta chains family. As to quaternary structure, F-type ATPases have 2 components, CF(1) - the catalytic core - and CF(0) - the membrane proton channel. CF(1) has five subunits: alpha(3), beta(3), gamma(1), delta(1), epsilon(1). CF(0) has four main subunits: a(1), b(1), b'(1) and c(9-12).

It is found in the cell inner membrane. It catalyses the reaction ATP + H2O + 4 H(+)(in) = ADP + phosphate + 5 H(+)(out). Functionally, produces ATP from ADP in the presence of a proton gradient across the membrane. The alpha chain is a regulatory subunit. This is ATP synthase subunit alpha from Rhodopseudomonas palustris (strain BisB18).